A 209-amino-acid polypeptide reads, in one-letter code: Large ribosomal subunit protein uL3 (209 aa).

Gln-150 carries the post-translational modification N5-methylglutamine.

Belongs to the universal ribosomal protein uL3 family. In terms of assembly, part of the 50S ribosomal subunit. Forms a cluster with proteins L14 and L19. Post-translationally, methylated by PrmB.

In terms of biological role, one of the primary rRNA binding proteins, it binds directly near the 3'-end of the 23S rRNA, where it nucleates assembly of the 50S subunit. This Vibrio parahaemolyticus serotype O3:K6 (strain RIMD 2210633) protein is Large ribosomal subunit protein uL3.